The chain runs to 443 residues: Ribosomal protein uS12 methylthiotransferase RimO (443 aa).

The MTTase N-terminal domain maps to 8–118 (PKVGFVSLGC…VVNAVHEVVP (111 aa)). The [4Fe-4S] cluster site is built by cysteine 17, cysteine 53, cysteine 82, cysteine 151, cysteine 155, and cysteine 158. The Radical SAM core domain maps to 137–376 (LTPRHYAYLK…AHQQAISSAR (240 aa)). The region spanning 378–443 (QLRIGKEIEV…DEYDMWAEPV (66 aa)) is the TRAM domain.

It belongs to the methylthiotransferase family. RimO subfamily. Requires [4Fe-4S] cluster as cofactor.

It is found in the cytoplasm. The catalysed reaction is L-aspartate(89)-[ribosomal protein uS12]-hydrogen + (sulfur carrier)-SH + AH2 + 2 S-adenosyl-L-methionine = 3-methylsulfanyl-L-aspartate(89)-[ribosomal protein uS12]-hydrogen + (sulfur carrier)-H + 5'-deoxyadenosine + L-methionine + A + S-adenosyl-L-homocysteine + 2 H(+). In terms of biological role, catalyzes the methylthiolation of an aspartic acid residue of ribosomal protein uS12. The protein is Ribosomal protein uS12 methylthiotransferase RimO of Pseudomonas putida (strain W619).